A 1669-amino-acid polypeptide reads, in one-letter code: Collagen alpha-1(IV) chain (1669 aa).

The signal sequence occupies residues 1 to 27 (MGPRLGVWLLLLLAALLLHEESSRAAA). A propeptide spans 28-172 (KGGCAGSGCG…LGHIPGTLLK (145 aa)) (N-terminal propeptide (7S domain)). Residues 50–1445 (ERGLPGLQGV…PPGTPSVDHG (1396 aa)) form a disordered region. The triple-helical region stretch occupies residues 173-1440 (GERGYPGQPG…PGSMGPPGTP (1268 aa)). Pro residues predominate over residues 196 to 214 (VGPPGFTGPPGPPGPPGPP). Residues Pro-204, Pro-207, and Pro-210 each carry the 3-hydroxyproline modification. 2 stretches are compositionally biased toward basic and acidic residues: residues 254–263 (TAMRGEKGQK) and 289–298 (PGKDGEKGEK). The segment covering 347 to 356 (GYPGGPGAKG) has biased composition (gly residues). Residues 357 to 366 (ETGPKGFPGI) show a composition bias toward low complexity. The span at 367–376 (PGQPGPPGFP) shows a compositional bias: pro residues. The segment covering 396–412 (PGLPGVSLPGPSGRDGL) has biased composition (low complexity). 2 stretches are compositionally biased toward pro residues: residues 413–424 (PGPPGPPGPPGQ) and 436–448 (PGPP…PGIP). The segment covering 485–494 (PGEIGFPGQP) has biased composition (low complexity). Basic and acidic residues-rich tracts occupy residues 497 to 508 (KGDRGLPGRDGL) and 535 to 545 (FDIRLKGDKGD). Positions 586–595 (GPPGGVGFPG) are enriched in gly residues. 3-hydroxyproline is present on residues Pro-587 and Pro-602. Pro-603 carries the 4-hydroxyproline modification. Pro-605 is modified (3-hydroxyproline). A 4-hydroxyproline mark is found at Pro-606, Pro-623, Pro-626, Pro-629, and Pro-632. Pro-647 bears the 3-hydroxyproline mark. Composition is skewed to gly residues over residues 758 to 767 (GNVGGPGIPG) and 797 to 817 (GVPG…GPPG). A compositionally biased stretch (low complexity) spans 847–871 (SQGLPGLTGQSGLPGLPGQQGTPGQ). A compositionally biased stretch (basic and acidic residues) spans 937–955 (SMDKVDMGSMKGEKGDQGE). Residues 1011–1020 (GSAGGMGLPG) show a composition bias toward gly residues. Low complexity-rich tracts occupy residues 1030-1040 (IPGPQGIPGLP), 1101-1114 (SPGS…PGLP), and 1193-1212 (FPGL…QGFM). The residue at position 1214 (Pro-1214) is a 3-hydroxyproline. Over residues 1247-1258 (PGRPGPMGPPGL) the composition is skewed to pro residues. A compositionally biased stretch (gly residues) spans 1290–1299 (GMPGIGGSPG). Pro residues predominate over residues 1413–1428 (FGPPGPRGFPGPPGPD). Residue Pro-1424 is modified to 3-hydroxyproline. The Collagen IV NC1 domain occupies 1445-1669 (GFLVTRHSQT…SRCQVCMRRT (225 aa)). 6 disulfides stabilise this stretch: Cys-1460/Cys-1551, Cys-1493/Cys-1548, Cys-1505/Cys-1511, Cys-1570/Cys-1665, Cys-1604/Cys-1662, and Cys-1616/Cys-1622. Met-1533 participates in a covalent cross-link: S-Lysyl-methionine sulfilimine (Met-Lys) (interchain with K-1651). Lys-1651 is covalently cross-linked (S-Lysyl-methionine sulfilimine (Lys-Met) (interchain with M-1533)).

Belongs to the type IV collagen family. In terms of assembly, there are six type IV collagen isoforms, alpha 1(IV)-alpha 6(IV), each of which can form a triple helix structure with 2 other chains to generate type IV collagen network. Interacts with EFEMP2. Lysines at the third position of the tripeptide repeating unit (G-X-Y) are hydroxylated in all cases. The modified lysines can be O-glycosylated. Post-translationally, contains 4-hydroxyproline. Prolines at the third position of the tripeptide repeating unit (G-X-Y) are hydroxylated in some or all of the chains. In terms of processing, contains 3-hydroxyproline. This modification occurs on the first proline residue in the sequence motif Gly-Pro-Hyp, where Hyp is 4-hydroxyproline. Type IV collagens contain numerous cysteine residues which are involved in inter- and intramolecular disulfide bonding. 12 of these, located in the NC1 domain, are conserved in all known type IV collagens. Post-translationally, the trimeric structure of the NC1 domains is stabilized by covalent bonds (sulfilimine cross-links) between Lys and Met residues. These cross-links are important for the mechanical stability of the basement membrane. Sulfilimine cross-link is catalyzed by PXDN. In terms of processing, proteolytic processing produces the C-terminal NC1 peptide, arresten.

It localises to the secreted. It is found in the extracellular space. The protein resides in the extracellular matrix. Its subcellular location is the basement membrane. Its function is as follows. Type IV collagen is the major structural component of glomerular basement membranes (GBM), forming a 'chicken-wire' meshwork together with laminins, proteoglycans and entactin/nidogen. Arresten, comprising the C-terminal NC1 domain, inhibits angiogenesis and tumor formation. The C-terminal half is found to possess the anti-angiogenic activity. Specifically inhibits endothelial cell proliferation, migration and tube formation. This chain is Collagen alpha-1(IV) chain, found in Bos taurus (Bovine).